A 369-amino-acid chain; its full sequence is Coiled-coil domain-containing protein 149 (369 aa).

The stretch at 1 to 249 forms a coiled coil; that stretch reads MKENNNAEIL…AKYKQMAEAV (249 aa).

This sequence belongs to the CCDC149 family. Expressed in amphid and phasmid ciliated neurons, and also pharyngeal, touch receptor and motor neurons.

The protein localises to the cell projection. It localises to the cilium. This chain is Coiled-coil domain-containing protein 149, found in Caenorhabditis elegans.